The following is a 309-amino-acid chain: Probable manganese-dependent inorganic pyrophosphatase (309 aa).

Mn(2+) contacts are provided by histidine 9, aspartate 13, aspartate 15, aspartate 75, histidine 97, and aspartate 149.

Belongs to the PPase class C family. It depends on Mn(2+) as a cofactor.

The protein localises to the cytoplasm. It carries out the reaction diphosphate + H2O = 2 phosphate + H(+). This chain is Probable manganese-dependent inorganic pyrophosphatase, found in Bacillus cereus (strain G9842).